A 353-amino-acid chain; its full sequence is Photosystem II protein D1 (353 aa).

The residue at position 2 (T2) is an N-acetylthreonine. T2 carries the phosphothreonine modification. 3 helical membrane-spanning segments follow: residues 29 to 46, 118 to 133, and 142 to 156; these read YIGW…TATS, HFLL…EWEL, and WIAV…AATA. Residue H118 participates in chlorophyll a binding. Y126 contacts pheophytin a. [CaMn4O5] cluster contacts are provided by D170 and E189. The chain crosses the membrane as a helical span at residues 197–218; it reads FHMLGVAGVFGGSLFSAMHGSL. Chlorophyll a is bound at residue H198. A quinone is bound by residues H215 and 264–265; that span reads SF. Residue H215 participates in Fe cation binding. H272 contributes to the Fe cation binding site. The helical transmembrane segment at 274–288 threads the bilayer; it reads FLAAWPVVGIWFTAL. H332, E333, D342, and A344 together coordinate [CaMn4O5] cluster. A propeptide spanning residues 345–353 is cleaved from the precursor; sequence AVEAPSTNG.

The protein belongs to the reaction center PufL/M/PsbA/D family. In terms of assembly, PSII is composed of 1 copy each of membrane proteins PsbA, PsbB, PsbC, PsbD, PsbE, PsbF, PsbH, PsbI, PsbJ, PsbK, PsbL, PsbM, PsbT, PsbX, PsbY, PsbZ, Psb30/Ycf12, at least 3 peripheral proteins of the oxygen-evolving complex and a large number of cofactors. It forms dimeric complexes. It depends on The D1/D2 heterodimer binds P680, chlorophylls that are the primary electron donor of PSII, and subsequent electron acceptors. It shares a non-heme iron and each subunit binds pheophytin, quinone, additional chlorophylls, carotenoids and lipids. D1 provides most of the ligands for the Mn4-Ca-O5 cluster of the oxygen-evolving complex (OEC). There is also a Cl(-1) ion associated with D1 and D2, which is required for oxygen evolution. The PSII complex binds additional chlorophylls, carotenoids and specific lipids. as a cofactor. In terms of processing, tyr-161 forms a radical intermediate that is referred to as redox-active TyrZ, YZ or Y-Z. Post-translationally, C-terminally processed by CTPA; processing is essential to allow assembly of the oxygen-evolving complex and thus photosynthetic growth.

Its subcellular location is the plastid. The protein localises to the chloroplast thylakoid membrane. The catalysed reaction is 2 a plastoquinone + 4 hnu + 2 H2O = 2 a plastoquinol + O2. In terms of biological role, photosystem II (PSII) is a light-driven water:plastoquinone oxidoreductase that uses light energy to abstract electrons from H(2)O, generating O(2) and a proton gradient subsequently used for ATP formation. It consists of a core antenna complex that captures photons, and an electron transfer chain that converts photonic excitation into a charge separation. The D1/D2 (PsbA/PsbD) reaction center heterodimer binds P680, the primary electron donor of PSII as well as several subsequent electron acceptors. The sequence is that of Photosystem II protein D1 from Oenothera parviflora (Small-flowered evening primrose).